The following is a 136-amino-acid chain: Large ribosomal subunit protein uL16 (136 aa).

The protein belongs to the universal ribosomal protein uL16 family. Part of the 50S ribosomal subunit.

Binds 23S rRNA and is also seen to make contacts with the A and possibly P site tRNAs. This Serratia proteamaculans (strain 568) protein is Large ribosomal subunit protein uL16.